The primary structure comprises 562 residues: MLLFLSVPQPRPPGARTRAGAARLVRWRRRQRLRLLQLRRLRGLLRGLRRRPGTGGRRPSRMALCGQAAGAASLPSELIVHIFSFLPAPDRLRASASCSHWRECLFYPALWPQLRICLRVSPAEQPRLEFLMRKCGWFVRELRVEFAAENYLSGGGGPGDGGSGGGTDTGTGGEDGEALQLSSRWLEVLRIYLELVLCVLLSIRNNRNLQKFSLFGDISVVHQQGSLSSTYLSRVDPDGKKIKQIQQLFEEILSNSRQLKWLSCGFMLEIVTPTSLSSLSNPIANTMEHLSLLDNNIPGNSTLITAVELERFVNLRSLALDFCDFTAEMARVLTDSNHVPLQRLSLLVHNASVMLKSLDNMPNDEHWKALSRKSSSLRVYLMVFDIKSEDMLKILKPSIPLERVHFDSYVTCVSGAIVDLISRQYDKFLTHFILMNDMIDTSGFPDLSDNRNEDPLVLLAWRCTKLTLLAIHGYTVWAHNLIAIARLRGSDLKVLQVTEESIDFDQGELADQDVDPVQNLIEQVSLGLGQSWHAVLDIESLSVFTEPNRHFYREMQSFSEDI.

The 47-residue stretch at 68-114 (AAGAASLPSELIVHIFSFLPAPDRLRASASCSHWRECLFYPALWPQL) folds into the F-box domain. The segment covering 155–173 (GGGPGDGGSGGGTDTGTGG) has biased composition (gly residues). Residues 155-176 (GGGPGDGGSGGGTDTGTGGEDG) are disordered.

As to quaternary structure, part of the SCF (SKP1-CUL1-F-box) E3 ubiquitin-protein ligase complex SCF(FBXO33) formed of CUL1, SKP1, RBX1 and FBXO33. Interacts via its N-terminus with YBX1 CSD domain. Directly interacts with SKP1 and CUL1.

It functions in the pathway protein modification; protein ubiquitination. In terms of biological role, substrate recognition component of a SCF (SKP1-CUL1-F-box protein) E3 ubiquitin-protein ligase complex which mediates the ubiquitination and subsequent proteasomal degradation of target proteins. Probably recognizes and binds to phosphorylated target proteins. Recognizes YBX1. This is F-box only protein 33 (Fbxo33) from Mus musculus (Mouse).